The chain runs to 165 residues: Phosphopantetheine adenylyltransferase (165 aa).

Residue Thr-10 participates in substrate binding. ATP contacts are provided by residues 10–11 and His-18; that span reads TF. Substrate is bound by residues Lys-42, Leu-75, and Arg-89. ATP contacts are provided by residues 90–92, Glu-100, and 125–131; these read GVR and VSFISSS.

Belongs to the bacterial CoaD family. As to quaternary structure, homohexamer. Mg(2+) is required as a cofactor.

The protein localises to the cytoplasm. It carries out the reaction (R)-4'-phosphopantetheine + ATP + H(+) = 3'-dephospho-CoA + diphosphate. It functions in the pathway cofactor biosynthesis; coenzyme A biosynthesis; CoA from (R)-pantothenate: step 4/5. Reversibly transfers an adenylyl group from ATP to 4'-phosphopantetheine, yielding dephospho-CoA (dPCoA) and pyrophosphate. The polypeptide is Phosphopantetheine adenylyltransferase (Buchnera aphidicola subsp. Schizaphis graminum (strain Sg)).